A 175-amino-acid chain; its full sequence is Putative lipoprotein LppP (175 aa).

Positions 1 to 30 (MRRQRSAVPILALLALLALLALIVGLGASG) are cleaved as a signal peptide. Cysteine 31 is lipidated: N-palmitoyl cysteine. The S-diacylglycerol cysteine moiety is linked to residue cysteine 31.

Its subcellular location is the cell membrane. The sequence is that of Putative lipoprotein LppP (lppP) from Mycobacterium bovis (strain ATCC BAA-935 / AF2122/97).